The following is a 947-amino-acid chain: MTPLSSPLSQYWQTVVERLPEGFTETSLSVQAKSVLTFSDFALDSVIAHPEWLAELESASPQADEWRHYAGWLQEALAGVCDDASLMRELRFFRRRIMVRIAWAQTLSLVDDETILQQLSHLAETLIVGARDWLYAACCREWGTPCNPQGVPQPLLILGMGKLGGGELNFSSDIDLIFAWPEHGETRGGRRELDNAQFFTRLGQRLIKALDQPTMDGFVYRVDMRLRPFGDSGPLVLSFAALEDYYQEQGRDWERYAMVKARLMGDNDDAWSRELRAMLRPFVFRRYIDFSVIQSLRNMKGMIAREVRRRGLKDNIKLGAGGIREIEFIVQVFQLIRGGREPSLQSRSLLPTLDAIAALHLLPENDVAQLRVAYLFLRRLENLLQSINDEQTQTLPADDLNRARLAWGMKAENWPQLVGELTDHMANVRRVFNELIGDDEADTPQEEERSEPWRDVWQDALQEDDSTPVLAHLADEDRRQVLTLIADFRKELDKRPIGPRGRQVLDQLMPHLLADVCSREDAAVTLSRITPLLAGIVTRTTYLELLSEFPGALKHLIMLCAASPMIASQLARYPLLLDELLDPGTLYQPTATDAYRDELRQYLLRVPEEDEEQQLEALRQFKQAQLLRIAAADIAGTLPVMKVSDHLTWLAEAMIDAVVQQAWTQMVARYGQPAHLDERQGRGFAVVGYGKLGGWELGYSSDLDLIFLHDCPMDVMTNGEREIDGRQFYLRLAQRIMHLFSTRTSSGILYEVDARLRPSGAAGMLVTSADAFADYQQHEAWTWEHQALVRARVVYGDPQLTSQFDTVRRTIMTTARDGKTLQTEVREMREKMRAHLGNKHRDRFDIKADEGGITDIEFIAQYLVLRYAHEKPKLTRWSDNVRILELLAQNGIMDEHEAQALTVAYTTLRDELHHLALQELPGHVAQTCFSKERALVQASWRKWLVAV.

The adenylyl removase stretch occupies residues 1 to 440 (MTPLSSPLSQ…VFNELIGDDE (440 aa)). The tract at residues 450–947 (SEPWRDVWQD…ASWRKWLVAV (498 aa)) is adenylyl transferase.

This sequence belongs to the GlnE family. Mg(2+) serves as cofactor.

It carries out the reaction [glutamine synthetase]-O(4)-(5'-adenylyl)-L-tyrosine + phosphate = [glutamine synthetase]-L-tyrosine + ADP. The enzyme catalyses [glutamine synthetase]-L-tyrosine + ATP = [glutamine synthetase]-O(4)-(5'-adenylyl)-L-tyrosine + diphosphate. Functionally, involved in the regulation of glutamine synthetase GlnA, a key enzyme in the process to assimilate ammonia. When cellular nitrogen levels are high, the C-terminal adenylyl transferase (AT) inactivates GlnA by covalent transfer of an adenylyl group from ATP to specific tyrosine residue of GlnA, thus reducing its activity. Conversely, when nitrogen levels are low, the N-terminal adenylyl removase (AR) activates GlnA by removing the adenylyl group by phosphorolysis, increasing its activity. The regulatory region of GlnE binds the signal transduction protein PII (GlnB) which indicates the nitrogen status of the cell. The polypeptide is Bifunctional glutamine synthetase adenylyltransferase/adenylyl-removing enzyme (Salmonella dublin (strain CT_02021853)).